Consider the following 454-residue polypeptide: MTTSKRHYHITTFGCQMNKADSERMAGVLEDMGFEWSEDPNNADVILYNTCTIRDNAEQKVYSYLGRQAKRKHDQPDLTLIVAGCVAQQEGEALLRRVPELDLVMGPQHANRLKDLLESVFDGNQVVATESVHIIEDITQPRRDSKVTAWVNVIYGCNERCTYCVVPNVRGIEQSRTPSAIRAEMEELGRQGYKEITLLGQNIDAYGRDLPGTTPEGRHLHNFTDLLYYVHDVPGIERLRFATSHPRYFTERLIKACAELPKVCKHFHIPFQSGDNELLKAMARGYTHEKYRRIIDTIRRYMPDASISADAIVGFPGETEAQFENTLKLVEDIGFDMLNTAAYSPRPGTPAALWDNQLSEEVKSDRLQRLNHLGNLKVAERSQRYFGRIEEVLVEDQNPKDQTQVMGRTDGNRLTFFSGDIKELKGQLVKVKITEVRPFSLTGQPVEVRQAIPV.

One can recognise an MTTase N-terminal domain in the interval 6–122 (RHYHITTFGC…LKDLLESVFD (117 aa)). The [4Fe-4S] cluster site is built by Cys-15, Cys-51, Cys-85, Cys-157, Cys-161, and Cys-164. The 239-residue stretch at 143–381 (RDSKVTAWVN…HLGNLKVAER (239 aa)) folds into the Radical SAM core domain. The TRAM domain occupies 383–447 (QRYFGRIEEV…PFSLTGQPVE (65 aa)).

The protein belongs to the methylthiotransferase family. MiaB subfamily. Monomer. It depends on [4Fe-4S] cluster as a cofactor.

Its subcellular location is the cytoplasm. It carries out the reaction N(6)-dimethylallyladenosine(37) in tRNA + (sulfur carrier)-SH + AH2 + 2 S-adenosyl-L-methionine = 2-methylsulfanyl-N(6)-dimethylallyladenosine(37) in tRNA + (sulfur carrier)-H + 5'-deoxyadenosine + L-methionine + A + S-adenosyl-L-homocysteine + 2 H(+). Functionally, catalyzes the methylthiolation of N6-(dimethylallyl)adenosine (i(6)A), leading to the formation of 2-methylthio-N6-(dimethylallyl)adenosine (ms(2)i(6)A) at position 37 in tRNAs that read codons beginning with uridine. This chain is tRNA-2-methylthio-N(6)-dimethylallyladenosine synthase, found in Nostoc punctiforme (strain ATCC 29133 / PCC 73102).